We begin with the raw amino-acid sequence, 225 residues long: Phosphoserine phosphatase (225 aa).

Residue Met-1 is modified to N-acetylmethionine. The Nucleophile role is filled by Asp-20. Residues Asp-20 and Asp-22 each contribute to the Mg(2+) site. L-serine is bound at residue 20 to 22 (DVD). Asp-22 acts as the Proton donor in catalysis. Met-52 serves as a coordination point for O-phospho-L-serine. Position 53 (Gly-53) interacts with phosphate. L-serine-binding positions include 109–111 (SGG) and Lys-158. Residues 109–111 (SGG) and Lys-158 contribute to the O-phospho-L-serine site. Asp-179 is a Mg(2+) binding site. Position 182 (Thr-182) interacts with O-phospho-L-serine. Thr-182 serves as a coordination point for phosphate.

It belongs to the HAD-like hydrolase superfamily. SerB family. Homodimer. Mg(2+) is required as a cofactor.

It localises to the cytoplasm. It is found in the cytosol. The enzyme catalyses O-phospho-L-serine + H2O = L-serine + phosphate. The catalysed reaction is O-phospho-D-serine + H2O = D-serine + phosphate. It functions in the pathway amino-acid biosynthesis; L-serine biosynthesis; L-serine from 3-phospho-D-glycerate: step 3/3. Functionally, catalyzes the last irreversible step in the biosynthesis of L-serine from carbohydrates, the dephosphorylation of O-phospho-L-serine to L-serine. L-serine can then be used in protein synthesis, to produce other amino acids, in nucleotide metabolism or in glutathione synthesis, or can be racemized to D-serine, a neuromodulator. May also act on O-phospho-D-serine. The polypeptide is Phosphoserine phosphatase (Rattus norvegicus (Rat)).